We begin with the raw amino-acid sequence, 81 residues long: Acyl carrier protein (81 aa).

Residues 4 to 79 (SEIFGKVKDI…AAVDFIAGKV (76 aa)) form the Carrier domain. Position 39 is an O-(pantetheine 4'-phosphoryl)serine (Ser-39).

Belongs to the acyl carrier protein (ACP) family. 4'-phosphopantetheine is transferred from CoA to a specific serine of apo-ACP by AcpS. This modification is essential for activity because fatty acids are bound in thioester linkage to the sulfhydryl of the prosthetic group.

It is found in the cytoplasm. Its pathway is lipid metabolism; fatty acid biosynthesis. Its function is as follows. Carrier of the growing fatty acid chain in fatty acid biosynthesis. The chain is Acyl carrier protein from Acaryochloris marina (strain MBIC 11017).